We begin with the raw amino-acid sequence, 177 residues long: ATP synthase subunit delta (177 aa).

This sequence belongs to the ATPase delta chain family. In terms of assembly, F-type ATPases have 2 components, F(1) - the catalytic core - and F(0) - the membrane proton channel. F(1) has five subunits: alpha(3), beta(3), gamma(1), delta(1), epsilon(1). F(0) has three main subunits: a(1), b(2) and c(10-14). The alpha and beta chains form an alternating ring which encloses part of the gamma chain. F(1) is attached to F(0) by a central stalk formed by the gamma and epsilon chains, while a peripheral stalk is formed by the delta and b chains.

The protein localises to the cell inner membrane. Its function is as follows. F(1)F(0) ATP synthase produces ATP from ADP in the presence of a proton or sodium gradient. F-type ATPases consist of two structural domains, F(1) containing the extramembraneous catalytic core and F(0) containing the membrane proton channel, linked together by a central stalk and a peripheral stalk. During catalysis, ATP synthesis in the catalytic domain of F(1) is coupled via a rotary mechanism of the central stalk subunits to proton translocation. This protein is part of the stalk that links CF(0) to CF(1). It either transmits conformational changes from CF(0) to CF(1) or is implicated in proton conduction. This chain is ATP synthase subunit delta, found in Neisseria meningitidis serogroup A / serotype 4A (strain DSM 15465 / Z2491).